Reading from the N-terminus, the 380-residue chain is tRNA-specific 2-thiouridylase MnmA (380 aa).

ATP is bound by residues 12-19 and M38; that span reads GLSGGVDS. The tract at residues 108–110 is interaction with target base in tRNA; the sequence is NPD. C113 acts as the Nucleophile in catalysis. A disulfide bond links C113 and C210. G138 contributes to the ATP binding site. The tract at residues 160–162 is interaction with tRNA; sequence KDQ. The Cysteine persulfide intermediate role is filled by C210.

It belongs to the MnmA/TRMU family.

It is found in the cytoplasm. It carries out the reaction S-sulfanyl-L-cysteinyl-[protein] + uridine(34) in tRNA + AH2 + ATP = 2-thiouridine(34) in tRNA + L-cysteinyl-[protein] + A + AMP + diphosphate + H(+). Catalyzes the 2-thiolation of uridine at the wobble position (U34) of tRNA, leading to the formation of s(2)U34. In Ureaplasma urealyticum serovar 10 (strain ATCC 33699 / Western), this protein is tRNA-specific 2-thiouridylase MnmA.